A 272-amino-acid chain; its full sequence is Diaminopimelate epimerase (272 aa).

N11 and N60 together coordinate substrate. Residue C69 is the Proton donor of the active site. Residues 70–71 (GN), N181, and 199–200 (ER) contribute to the substrate site. C209 serves as the catalytic Proton acceptor. A substrate-binding site is contributed by 210 to 211 (GT).

Belongs to the diaminopimelate epimerase family. In terms of assembly, homodimer.

The protein resides in the cytoplasm. The catalysed reaction is (2S,6S)-2,6-diaminopimelate = meso-2,6-diaminopimelate. Its pathway is amino-acid biosynthesis; L-lysine biosynthesis via DAP pathway; DL-2,6-diaminopimelate from LL-2,6-diaminopimelate: step 1/1. Functionally, catalyzes the stereoinversion of LL-2,6-diaminopimelate (L,L-DAP) to meso-diaminopimelate (meso-DAP), a precursor of L-lysine and an essential component of the bacterial peptidoglycan. In Helicobacter pylori (strain P12), this protein is Diaminopimelate epimerase.